We begin with the raw amino-acid sequence, 390 residues long: Exodeoxyribonuclease 7 large subunit (390 aa).

It belongs to the XseA family. Heterooligomer composed of large and small subunits.

The protein resides in the cytoplasm. It catalyses the reaction Exonucleolytic cleavage in either 5'- to 3'- or 3'- to 5'-direction to yield nucleoside 5'-phosphates.. Its function is as follows. Bidirectionally degrades single-stranded DNA into large acid-insoluble oligonucleotides, which are then degraded further into small acid-soluble oligonucleotides. The protein is Exodeoxyribonuclease 7 large subunit of Synechococcus sp. (strain CC9311).